We begin with the raw amino-acid sequence, 999 residues long: Protein Smaug (999 aa).

The segment covering 1 to 37 has biased composition (polar residues); that stretch reads MKYATGTDNAMTSGISGQTNNSNSVSNEMQPTTSTPT. Disordered regions lie at residues 1–45, 50–69, and 321–370; these read MKYA…EATS, TATY…QSQP, and CSSV…GSSS. Low complexity predominate over residues 321–338; sequence CSSVASSSMCPASGSRSS. Phosphoserine occurs at positions 564 and 575. An interaction with cup region spans residues 583–763; the sequence is EFKPNYIKFH…KDLKFKLSKM (181 aa). The SAM domain maps to 600 to 654; it reads GIGLWLKSLRLHKYIELFKNMTYEEMLLITEDFLQSVGVTKGASHKLALCIDKLK. Residues 773–892 are disordered; it reads HVKPAGVGPN…HHHAQQMQQM (120 aa). 2 stretches are compositionally biased toward polar residues: residues 801–822 and 854–864; these read KNGS…NFSL and HQPQYKSSSYP. Ser972 is subject to Phosphoserine.

This sequence belongs to the SMAUG family. As to quaternary structure, interacts with oskar (osk). Binds to the 3'-UTR of nos. Interacts with cup, which in turn recruits eIF4-E, leading to an indirect interaction between smg and eIF4-E that prevents mRNA translation.

It is found in the cytoplasm. Translation regulator that binds to the 3'-UTR of specific mRNAs such as nanos (nos) and prevent their translation. Prevents translation of unlocalized nos in the bulk cytoplasm via the recruitment of cup. In Drosophila yakuba (Fruit fly), this protein is Protein Smaug (smg).